We begin with the raw amino-acid sequence, 248 residues long: Aspartate/glutamate leucyltransferase (248 aa).

Belongs to the R-transferase family. Bpt subfamily.

The protein localises to the cytoplasm. The catalysed reaction is N-terminal L-glutamyl-[protein] + L-leucyl-tRNA(Leu) = N-terminal L-leucyl-L-glutamyl-[protein] + tRNA(Leu) + H(+). It catalyses the reaction N-terminal L-aspartyl-[protein] + L-leucyl-tRNA(Leu) = N-terminal L-leucyl-L-aspartyl-[protein] + tRNA(Leu) + H(+). Its function is as follows. Functions in the N-end rule pathway of protein degradation where it conjugates Leu from its aminoacyl-tRNA to the N-termini of proteins containing an N-terminal aspartate or glutamate. This chain is Aspartate/glutamate leucyltransferase, found in Methylorubrum populi (strain ATCC BAA-705 / NCIMB 13946 / BJ001) (Methylobacterium populi).